Here is an 855-residue protein sequence, read N- to C-terminus: DNA mismatch repair protein MutS (855 aa).

616–623 (GPNMGGKS) provides a ligand contact to ATP.

The protein belongs to the DNA mismatch repair MutS family.

In terms of biological role, this protein is involved in the repair of mismatches in DNA. It is possible that it carries out the mismatch recognition step. This protein has a weak ATPase activity. The sequence is that of DNA mismatch repair protein MutS from Salmonella gallinarum (strain 287/91 / NCTC 13346).